A 319-amino-acid polypeptide reads, in one-letter code: Alpha/beta-gliadin A-V (319 aa).

The N-terminal stretch at 1–20 (MKTFLILALLAIVATTATTA) is a signal peptide. Positions 28–58 (LQPQNPSQQQPQEQVPLVQQQQFPGQQQQFP) are enriched in low complexity. 2 disordered regions span residues 28–125 (LQPQ…QQAQ) and 258–278 (SQVSFQPSQLNPQAQGSVQPQ). 2 stretches are compositionally biased toward pro residues: residues 59–71 (PQQPYPQPQPFPS) and 81–104 (FPQPQPFPPQLPYPQPQSFPPQQP). Residues 105-125 (YPQQQPQYLQPQQPISQQQAQ) are compositionally biased toward low complexity. Positions 267-278 (LNPQAQGSVQPQ) are enriched in polar residues.

The protein belongs to the gliadin/glutenin family. Post-translationally, substrate of transglutaminase.

Its function is as follows. Gliadin is the major seed storage protein in wheat. This Triticum aestivum (Wheat) protein is Alpha/beta-gliadin A-V.